We begin with the raw amino-acid sequence, 319 residues long: Probable cytochrome c oxidase subunit 2 (319 aa).

The signal sequence occupies residues 1–33 (MSPNGSDRSPRRPMRRKLLQALTAGLVLATATG). A run of 2 helical transmembrane segments spans residues 63–83 (WAAALATGVLVWGLILWSVFF) and 101–121 (LPIEALYTMVPLVIVSVLFYF). Residues histidine 227, cysteine 262, cysteine 266, and histidine 270 each coordinate Cu cation.

This sequence belongs to the cytochrome c oxidase subunit 2 family. Cu cation serves as cofactor. Requires heme as cofactor.

The protein localises to the cell membrane. It carries out the reaction 4 Fe(II)-[cytochrome c] + O2 + 8 H(+)(in) = 4 Fe(III)-[cytochrome c] + 2 H2O + 4 H(+)(out). Its function is as follows. Subunits I and II form the functional core of the enzyme complex. Electrons originating in cytochrome c are transferred via heme a and Cu(A) to the binuclear center formed by heme a3 and Cu(B). This Streptomyces coelicolor (strain ATCC BAA-471 / A3(2) / M145) protein is Probable cytochrome c oxidase subunit 2 (ctaC).